A 437-amino-acid polypeptide reads, in one-letter code: Adenylosuccinate synthetase (437 aa).

Residues 12–18 (GDEGKGK) and 40–42 (GHT) each bind GTP. The active-site Proton acceptor is Asp13. Mg(2+) contacts are provided by Asp13 and Gly40. Residues 13–16 (DEGK), 38–41 (NAGH), Thr128, Arg142, Gln223, Thr238, and Arg302 each bind IMP. The Proton donor role is filled by His41. 298–304 (TTTGRRR) lines the substrate pocket. GTP contacts are provided by residues Arg304, 330-332 (KLD), and 412-414 (SLG).

The protein belongs to the adenylosuccinate synthetase family. As to quaternary structure, homodimer. It depends on Mg(2+) as a cofactor.

Its subcellular location is the cytoplasm. It carries out the reaction IMP + L-aspartate + GTP = N(6)-(1,2-dicarboxyethyl)-AMP + GDP + phosphate + 2 H(+). The protein operates within purine metabolism; AMP biosynthesis via de novo pathway; AMP from IMP: step 1/2. Plays an important role in the de novo pathway of purine nucleotide biosynthesis. Catalyzes the first committed step in the biosynthesis of AMP from IMP. The chain is Adenylosuccinate synthetase from Synechococcus sp. (strain CC9311).